Here is a 434-residue protein sequence, read N- to C-terminus: Septin-6 (434 aa).

Ala2 is modified (N-acetylalanine). Position 27 is a phosphoserine (Ser27). The Septin-type G domain occupies 39 to 305 (QGFCFNILCV…ELYRRCKLEE (267 aa)). The tract at residues 49–56 (GETGLGKS) is G1 motif. Residues 49–56 (GETGLGKS), Gly104, 185–193 (KADAISKSE), Gly239, and Arg254 each bind GTP. A G3 motif region spans residues 101-104 (STVG). The tract at residues 184-187 (AKAD) is G4 motif. Positions 321–409 (QETYEAKRNE…KTAAELLQSQ (89 aa)) form a coiled coil. Lys367 carries the N6-acetyllysine modification. Residues 405 to 434 (LLQSQGSQAGGSQTLKRDKEKKNNPWLCTE) are disordered. Positions 407–417 (QSQGSQAGGSQ) are enriched in low complexity. Phosphoserine is present on Ser416. Position 418 is a phosphothreonine (Thr418).

The protein belongs to the TRAFAC class TrmE-Era-EngA-EngB-Septin-like GTPase superfamily. Septin GTPase family. As to quaternary structure, septins polymerize into heterooligomeric protein complexes that form filaments, and associate with cellular membranes, actin filaments and microtubules. GTPase activity is required for filament formation. Filaments are assembled from asymmetrical heterotrimers, composed of SEPTIN2, SEPTIN6 and SEPTIN7 that associate head-to-head to form a hexameric unit. Within the trimer, directly interacts with SEPTIN2 and SEPTIN7. Also interacts with SEPTIN9 and SEPTIN12. Interaction with SEPTIN12 alters filament structure. Component of a septin core octameric complex consisting of SEPTIN12, SEPTIN7, SEPTIN6 and SEPTIN2 or SEPTIN4 in the order 12-7-6-2-2-6-7-12 or 12-7-6-4-4-6-7-12 and located in the sperm annulus. Interacts with SOCS7. Interacts with HNRNPA1. (Microbial infection) Interacts with HCV NS5B. As to expression, widely expressed.

Its subcellular location is the cytoplasm. It is found in the cytoskeleton. The protein localises to the spindle. It localises to the chromosome. The protein resides in the centromere. Its subcellular location is the kinetochore. It is found in the cleavage furrow. The protein localises to the midbody. It localises to the cell projection. The protein resides in the cilium. Its subcellular location is the flagellum. Its function is as follows. Filament-forming cytoskeletal GTPase. Required for normal organization of the actin cytoskeleton. Involved in cytokinesis. May play a role in HCV RNA replication. Forms a filamentous structure with SEPTIN12, SEPTIN6, SEPTIN2 and probably SEPTIN4 at the sperm annulus which is required for the structural integrity and motility of the sperm tail during postmeiotic differentiation. The sequence is that of Septin-6 from Homo sapiens (Human).